The following is a 350-amino-acid chain: Anthranilate phosphoribosyltransferase (350 aa).

5-phospho-alpha-D-ribose 1-diphosphate contacts are provided by residues G94, 97–98 (GD), T102, 104–107 (NIST), 122–130 (KHGNRAVSS), and S134. G94 serves as a coordination point for anthranilate. Mg(2+) is bound at residue S106. N125 contacts anthranilate. R180 is an anthranilate binding site. Residues D239 and E240 each coordinate Mg(2+).

This sequence belongs to the anthranilate phosphoribosyltransferase family. As to quaternary structure, homodimer. It depends on Mg(2+) as a cofactor.

It catalyses the reaction N-(5-phospho-beta-D-ribosyl)anthranilate + diphosphate = 5-phospho-alpha-D-ribose 1-diphosphate + anthranilate. Its pathway is amino-acid biosynthesis; L-tryptophan biosynthesis; L-tryptophan from chorismate: step 2/5. Functionally, catalyzes the transfer of the phosphoribosyl group of 5-phosphorylribose-1-pyrophosphate (PRPP) to anthranilate to yield N-(5'-phosphoribosyl)-anthranilate (PRA). The polypeptide is Anthranilate phosphoribosyltransferase (Geobacter sulfurreducens (strain ATCC 51573 / DSM 12127 / PCA)).